Here is a 339-residue protein sequence, read N- to C-terminus: MKDSLVLLSRILAHPDSRCWFLAWNPAGTLLASCGGDRSVRIWGREGDSWICKSVLCEGHQRTVRKVAWSPCGNYLASASFDATTCIWKKNEDDFECVTTLEGHENEVKSVAWAPSGNLLATCSRDKSVWVWEVDEEDEYECVSVLNSHTQDVKHVVWHPSQELLASASYDDTVKLYREEEDDWVCCATLEGHESTVWSLAFDPSGQRLASCSDDRTVRIWRQYLPGNEQGVACSGSEASWKCVCTLSGFHSRTIYDVAWCQLTGTLATACGDDAIRVFEEDPGSDPQQPTFSLTAHVPQAHSQDVNCVAWNPKERGLLASCSDDGELAFWKYQPSEGI.

WD repeat units follow at residues 14-53, 59-98, 103-142, 148-187, 192-231, 250-289, and 301-339; these read HPDSRCWFLAWNPAGTLLASCGGDRSVRIWGREGDSWICK, GHQRTVRKVAWSPCGNYLASASFDATTCIWKKNEDDFECV, GHENEVKSVAWAPSGNLLATCSRDKSVWVWEVDEEDEYEC, SHTQDVKHVVWHPSQELLASASYDDTVKLYREEEDDWVCC, GHESTVWSLAFDPSGQRLASCSDDRTVRIWRQYLPGNEQG, FHSRTIYDVAWCQLTGTLATACGDDAIRVFEEDPGSDPQQ, and AHSQDVNCVAWNPKERGLLASCSDDGELAFWKYQPSEGI. An LYR motif; required for interaction with HSC20 motif is present at residues 176 to 178; that stretch reads LYR.

It belongs to the WD repeat CIA1 family. As to quaternary structure, component of the CIA complex. Interacts with CIAO2A and forms a complex with CIAO2B and MMS19; the interactions with CIAO2A and CIAO2B are mutually exclusive. Interacts with CHD1L, ERCC2, IREB2 and POLD1. Component of the MMXD complex, which includes CIAO1, ERCC2, CIAO2B, MMS19 and SLC25A5. Interacts with WT1. Interacts with CIAO3. Interacts (via LYR motif) with HSC20.

The protein resides in the cytoplasm. Key component of the cytosolic iron-sulfur protein assembly (CIA) complex, a multiprotein complex that mediates the incorporation of iron-sulfur cluster into extramitochondrial Fe/S proteins. As a CIA complex component, interacts specifically with CIAO2A or CIAO2B and MMS19 to assist different branches of iron-sulfur protein assembly, depending of its interactors. The complex CIAO1:CIAO2B:MMS19 binds to and facilitates the assembly of most cytosolic-nuclear Fe/S proteins. CIAO1:CIAO2A specifically matures ACO1 and stabilizes IREB2. Seems to specifically modulate the transactivation activity of WT1. As part of the mitotic spindle-associated MMXD complex it may play a role in chromosome segregation. This Bos taurus (Bovine) protein is Probable cytosolic iron-sulfur protein assembly protein CIAO1.